Reading from the N-terminus, the 107-residue chain is Ribosome-associated factor Y (107 aa).

The disordered stretch occupies residues 85–107 (LNKLQHKSESRRADERLKDSFEN).

In terms of assembly, associates mainly with 70S ribosomes.

During stationary phase, prevents 70S dimer formation, probably in order to regulate translation efficiency during transition between the exponential and the stationary phases. In addition, during environmental stress such as cold shock or excessive cell density at stationary phase, stabilizes the 70S ribosome against dissociation, inhibits translation initiation and increase translation accuracy. When normal growth conditions are restored, is quickly released from the ribosome. The polypeptide is Ribosome-associated factor Y (Haemophilus influenzae (strain ATCC 51907 / DSM 11121 / KW20 / Rd)).